A 210-amino-acid polypeptide reads, in one-letter code: MECRERRLAADLIALSSVEGLPVSEAAKRLCMTRQGLYKLLKQLRAEGYVAEGSVVKLTPKGRDFLSGILRDLLRYFNIASIRLVGRVVSGLGEGAFYISLEGYKRAIEERLGFTPFPGTLNIKLDPQYMPYRRYLDGLPGVVIPGFSNGLRTYGAVKAFRARVNGVEGAVVMPERTHHPTDVIEVVAPVKLRDALGLRDGDVVEVEVLL.

The interval Met-1–Ser-81 is H-T-H motif-like. Residues Ile-82–Leu-210 are riboflavin kinase. Gly-91 to Ala-96 contributes to the CDP binding site. Mg(2+) contacts are provided by Thr-120 and Asn-122. 2 residues coordinate FMN: Thr-177 and Glu-185. A CDP-binding site is contributed by Val-190–Arg-193.

The protein belongs to the archaeal riboflavin kinase family. It depends on Mg(2+) as a cofactor.

The catalysed reaction is riboflavin + CTP = CDP + FMN + H(+). It participates in cofactor biosynthesis; FMN biosynthesis; FMN from riboflavin (CTP route): step 1/1. Catalyzes the CTP-dependent phosphorylation of riboflavin (vitamin B2) to form flavin mononucleotide (FMN). This Pyrobaculum arsenaticum (strain DSM 13514 / JCM 11321 / PZ6) protein is Riboflavin kinase (ribK).